The primary structure comprises 78 residues: Large ribosomal subunit protein eL20 (78 aa).

This sequence belongs to the eukaryotic ribosomal protein eL20 family. Part of the 50S ribosomal subunit. Binds 23S rRNA.

The sequence is that of Large ribosomal subunit protein eL20 from Pyrobaculum arsenaticum (strain DSM 13514 / JCM 11321 / PZ6).